The chain runs to 443 residues: GTPase Der (443 aa).

EngA-type G domains lie at 3 to 167 (PVIA…PEEK) and 176 to 349 (IKIA…QSIQ). GTP is bound by residues 9 to 16 (GRPNVGKS), 56 to 60 (DTGGL), 119 to 122 (NKAD), 182 to 189 (GRPNVGKS), 229 to 233 (DTAGI), and 294 to 297 (NKWD). Positions 350–434 (QELTTGQLTR…PVHIKLKTDP (85 aa)) constitute a KH-like domain.

The protein belongs to the TRAFAC class TrmE-Era-EngA-EngB-Septin-like GTPase superfamily. EngA (Der) GTPase family. As to quaternary structure, associates with the 50S ribosomal subunit.

Its function is as follows. GTPase that plays an essential role in the late steps of ribosome biogenesis. This chain is GTPase Der, found in Coxiella burnetii (strain CbuG_Q212) (Coxiella burnetii (strain Q212)).